Reading from the N-terminus, the 141-residue chain is Large ribosomal subunit protein uL11 (141 aa).

The protein belongs to the universal ribosomal protein uL11 family. As to quaternary structure, part of the ribosomal stalk of the 50S ribosomal subunit. Interacts with L10 and the large rRNA to form the base of the stalk. L10 forms an elongated spine to which L12 dimers bind in a sequential fashion forming a multimeric L10(L12)X complex. In terms of processing, one or more lysine residues are methylated.

Functionally, forms part of the ribosomal stalk which helps the ribosome interact with GTP-bound translation factors. The polypeptide is Large ribosomal subunit protein uL11 (Thermotoga sp. (strain RQ2)).